Reading from the N-terminus, the 142-residue chain is Large ribosomal subunit protein uL13 (142 aa).

It belongs to the universal ribosomal protein uL13 family. In terms of assembly, part of the 50S ribosomal subunit.

In terms of biological role, this protein is one of the early assembly proteins of the 50S ribosomal subunit, although it is not seen to bind rRNA by itself. It is important during the early stages of 50S assembly. The protein is Large ribosomal subunit protein uL13 of Herminiimonas arsenicoxydans.